Reading from the N-terminus, the 358-residue chain is Insulin gene enhancer protein ISL-2A (358 aa).

2 LIM zinc-binding domains span residues 27 to 80 (CVGC…CKRD) and 89 to 143 (CANC…RADH). Positions 190 to 249 (TTRVRTVLNEKQLHTLRTCYNANPRPDALMKEQLVEMTGLSPRVIRVWFQNKRCKDKKRS) form a DNA-binding region, homeobox. Over residues 325–335 (ESGSMGNSSGS) the composition is skewed to low complexity. The segment at 325–358 (ESGSMGNSSGSDVTSLSSQLPDTPNSMVASPVDT) is disordered. A compositionally biased stretch (polar residues) spans 336-358 (DVTSLSSQLPDTPNSMVASPVDT).

Its subcellular location is the nucleus. Binds to one of the cis-acting domain of the insulin gene enhancer. May be involved in subtype specialization of primary motoneurons. This Oncorhynchus tshawytscha (Chinook salmon) protein is Insulin gene enhancer protein ISL-2A (isl2a).